The following is a 780-amino-acid chain: ATP-dependent 6-phosphofructokinase, muscle type (780 aa).

T2 is subject to N-acetylthreonine. The segment at 2–390 is N-terminal catalytic PFK domain 1; that stretch reads THEEHHAAKT…NWEVYKLLAH (389 aa). ATP is bound by residues G25, 88–89, and 118–121; these read RC and GDGS. Residue D119 coordinates Mg(2+). S133 is subject to Phosphoserine. Residues 164–166, R201, 208–210, E264, R292, and 298–301 contribute to the substrate site; these read SID, MGR, and HVQR. Residue D166 is the Proton acceptor of the active site. S377 bears the Phosphoserine mark. An interdomain linker region spans residues 391–401; sequence IRPPVSKSGSH. The interval 402-780 is C-terminal regulatory PFK domain 2; it reads TVAVMNVGAP…SRKRSGEAPA (379 aa). Residues R471 and 528 to 532 contribute to the beta-D-fructose 2,6-bisphosphate site; that span reads TVSNN. An O-linked (GlcNAc) serine glycan is attached at S530. K557 carries the post-translational modification N6-(2-hydroxyisobutyryl)lysine. Beta-D-fructose 2,6-bisphosphate is bound by residues R566, 573-575, E629, R655, and 661-664; these read MGG and HMQQ. S667 is subject to Phosphoserine. Residue R735 participates in beta-D-fructose 2,6-bisphosphate binding. Phosphoserine is present on S775.

Belongs to the phosphofructokinase type A (PFKA) family. ATP-dependent PFK group I subfamily. Eukaryotic two domain clade 'E' sub-subfamily. As to quaternary structure, homo- and heterotetramers. Phosphofructokinase (PFK) enzyme functions as a tetramer composed of different combinations of 3 types of subunits, called PFKM (M), PFKL (L) and PFKP (P). The composition of the PFK tetramer differs according to the tissue type it is present in. The kinetic and regulatory properties of the tetrameric enzyme are dependent on the subunit composition, hence can vary across tissues. Interacts (via C-terminus) with HK1 (via N-terminal spermatogenic cell-specific region). Requires Mg(2+) as cofactor. In terms of processing, glcNAcylation decreases enzyme activity.

The protein resides in the cytoplasm. It catalyses the reaction beta-D-fructose 6-phosphate + ATP = beta-D-fructose 1,6-bisphosphate + ADP + H(+). It functions in the pathway carbohydrate degradation; glycolysis; D-glyceraldehyde 3-phosphate and glycerone phosphate from D-glucose: step 3/4. Its activity is regulated as follows. Allosterically activated by ADP, AMP, or fructose 2,6-bisphosphate, and allosterically inhibited by ATP or citrate. Catalyzes the phosphorylation of D-fructose 6-phosphate to fructose 1,6-bisphosphate by ATP, the first committing step of glycolysis. The protein is ATP-dependent 6-phosphofructokinase, muscle type (PFKM) of Equus caballus (Horse).